Reading from the N-terminus, the 714-residue chain is Forkhead box protein P2 (714 aa).

The span at 1-28 shows a compositional bias: polar residues; that stretch reads MMQESATETISNSSMNQNGMSTLSSQLD. Disordered regions lie at residues 1 to 45 and 284 to 338; these read MMQE…SEVS and KHGG…TGAS. Low complexity predominate over residues 291–304; sequence TTNNSSSTTSSTTS. The span at 314–323 shows a compositional bias: polar residues; it reads SIVNGQSSVL. Basic and acidic residues predominate over residues 325–336; it reads ARRDSSSHEETG. The C2H2-type zinc-finger motif lies at 345–370; that stretch reads GVCKWPGCESICEDFGQFLKHLNNEH. A leucine-zipper region spans residues 387–408; it reads VQQLEIQLSKERERLQAMMTHL. A CTBP1-binding region spans residues 421–425; it reads PLNLV. Low complexity predominate over residues 437–458; it reads TSPQSLPQTPTTPTAPVTPITQ. The disordered stretch occupies residues 437 to 464; sequence TSPQSLPQTPTTPTAPVTPITQGPSVIT. Residues 503-593 constitute a DNA-binding region (fork-head); that stretch reads RPPFTYATLI…SQKITGSPTL (91 aa). 2 disordered regions span residues 648–667 and 677–714; these read LDHI…QPHI and VIAE…EDLE. The span at 698-714 shows a compositional bias: acidic residues; it reads LEDDREIEEEPLSEDLE.

As to quaternary structure, forms homodimers and heterodimers with FOXP1 and FOXP4. Dimerization is required for DNA-binding. Interacts with CTBP1. Interacts with FOXP1. Interacts with TBR1. Interacts with ZMYM2.

It localises to the nucleus. Functionally, transcriptional repressor that may play a role in the specification and differentiation of lung epithelium. May also play a role in developing neural, gastrointestinal and cardiovascular tissues. Can act with CTBP1 to synergistically repress transcription but CTPBP1 is not essential. Plays a role in synapse formation by regulating SRPX2 levels. This Macaca mulatta (Rhesus macaque) protein is Forkhead box protein P2 (FOXP2).